Reading from the N-terminus, the 275-residue chain is Translation initiation factor 2 subunit alpha (275 aa).

The region spanning 12 to 83 (GEFVVATVKR…RKGHIDLSLR (72 aa)) is the S1 motif domain.

This sequence belongs to the eIF-2-alpha family. As to quaternary structure, heterotrimer composed of an alpha, a beta and a gamma chain.

In terms of biological role, eIF-2 functions in the early steps of protein synthesis by forming a ternary complex with GTP and initiator tRNA. The chain is Translation initiation factor 2 subunit alpha (eif2a) from Pyrococcus abyssi (strain GE5 / Orsay).